The primary structure comprises 629 residues: tRNA uridine 5-carboxymethylaminomethyl modification enzyme MnmG (629 aa).

13-18 (GGGHAG) serves as a coordination point for FAD. 273-287 (GPRYCPSIEDKIHRF) serves as a coordination point for NAD(+).

The protein belongs to the MnmG family. As to quaternary structure, homodimer. Heterotetramer of two MnmE and two MnmG subunits. Requires FAD as cofactor.

It localises to the cytoplasm. Its function is as follows. NAD-binding protein involved in the addition of a carboxymethylaminomethyl (cmnm) group at the wobble position (U34) of certain tRNAs, forming tRNA-cmnm(5)s(2)U34. The chain is tRNA uridine 5-carboxymethylaminomethyl modification enzyme MnmG from Shewanella amazonensis (strain ATCC BAA-1098 / SB2B).